The primary structure comprises 486 residues: Ribulose bisphosphate carboxylase large chain (486 aa).

Residues N126 and T176 each coordinate substrate. K178 acts as the Proton acceptor in catalysis. K180 is a binding site for substrate. 3 residues coordinate Mg(2+): K204, D206, and E207. N6-carboxylysine is present on K204. The active-site Proton acceptor is H296. Residues R297, H329, and S381 each coordinate substrate.

The protein belongs to the RuBisCO large chain family. Type I subfamily. Heterohexadecamer of 8 large chains and 8 small chains. It depends on Mg(2+) as a cofactor.

The catalysed reaction is 2 (2R)-3-phosphoglycerate + 2 H(+) = D-ribulose 1,5-bisphosphate + CO2 + H2O. It catalyses the reaction D-ribulose 1,5-bisphosphate + O2 = 2-phosphoglycolate + (2R)-3-phosphoglycerate + 2 H(+). In terms of biological role, ruBisCO catalyzes two reactions: the carboxylation of D-ribulose 1,5-bisphosphate, the primary event in carbon dioxide fixation, as well as the oxidative fragmentation of the pentose substrate. Both reactions occur simultaneously and in competition at the same active site. This Methylacidiphilum infernorum (isolate V4) (Methylokorus infernorum (strain V4)) protein is Ribulose bisphosphate carboxylase large chain.